Consider the following 360-residue polypeptide: Ferredoxin--NADP reductase (360 aa).

Positions 25, 44, 52, 57, 97, 132, 298, and 339 each coordinate FAD.

This sequence belongs to the ferredoxin--NADP reductase type 2 family. Homodimer. FAD serves as cofactor.

It carries out the reaction 2 reduced [2Fe-2S]-[ferredoxin] + NADP(+) + H(+) = 2 oxidized [2Fe-2S]-[ferredoxin] + NADPH. The polypeptide is Ferredoxin--NADP reductase (Chlorobaculum tepidum (strain ATCC 49652 / DSM 12025 / NBRC 103806 / TLS) (Chlorobium tepidum)).